Consider the following 560-residue polypeptide: Putative transport protein PBPRA2420 (560 aa).

Helical transmembrane passes span 5–25 (VASL…AVGL), 37–57 (VGNS…GFTF), 66–86 (FMLF…GIFF), 91–111 (HYLL…LAMT), and 161–181 (SLSV…IFLA). 2 consecutive RCK C-terminal domains span residues 203–292 (RGIG…FRNG) and 293–377 (KEVF…IGFI). The next 6 membrane-spanning stretches (helical) occupy residues 386–406 (LLAF…TLAF), 409–429 (VAFG…LGFL), 452–472 (LMVF…DSFA), 477–497 (MVLV…YLFG), 506–526 (ALLF…DMIN), and 539–559 (AGTY…IIIM).

This sequence belongs to the AAE transporter (TC 2.A.81) family. YbjL subfamily.

Its subcellular location is the cell membrane. The chain is Putative transport protein PBPRA2420 from Photobacterium profundum (strain SS9).